Here is a 264-residue protein sequence, read N- to C-terminus: MSSSAPIGVFDSGLGGISVARQIAKDMPAEHVLYFGDSANAPYGIKTPEQVRALSFDIVERFVRQGVKAVVIACNTATSAAVNDLREHYDIPIIGMEPALKVACDRGDVPSDPHHIPQRVIVAATPLTLRERKFAKLMDRFDSNNTIFKEPCPDLVEIVESGRLGDHDLVMRTLHGYFDQYDMEHIDSVVLGCTHFVFYRDYFRELLPERAAVIDGNEGTVRHLGVVLESLGKLAPEDATGGVELANSDPSERIAELSRKLLNV.

Residues 11-12 (DS) and 43-44 (YG) each bind substrate. Residue cysteine 74 is the Proton donor/acceptor of the active site. 75 to 76 (NT) contributes to the substrate binding site. The active-site Proton donor/acceptor is cysteine 193. Position 194–195 (194–195 (TH)) interacts with substrate.

It belongs to the aspartate/glutamate racemases family.

The enzyme catalyses L-glutamate = D-glutamate. Its pathway is cell wall biogenesis; peptidoglycan biosynthesis. In terms of biological role, provides the (R)-glutamate required for cell wall biosynthesis. The polypeptide is Glutamate racemase (Bifidobacterium longum (strain DJO10A)).